The chain runs to 616 residues: Glycogenin-1 (616 aa).

Residues Leu10, Tyr16, and Arg95 each coordinate UDP. Positions 10, 16, 95, 104, 120, 122, 158, 159, 185, 188, and 189 each coordinate UDP-alpha-D-glucose. Asp120 and Asp122 together coordinate UDP. Mn(2+)-binding residues include Asp120 and Asp122. O-linked (Glc...) tyrosine glycosylation is present at Tyr230. Residues His247, Gly250, and Lys253 each coordinate UDP. His247 serves as a coordination point for Mn(2+). Gly250 and Lys253 together coordinate UDP-alpha-D-glucose. Basic and acidic residues predominate over residues 283–302 (HQLNNEVSKPKISDSDKTET). Disordered stretches follow at residues 283–320 (HQLN…PTTN), 335–354 (NQNA…NPVP), and 371–516 (TNQP…SVDD). Basic and acidic residues predominate over residues 377–386 (ESREYSKEND). The segment covering 400-419 (SPPNSTQEPNSSYSVVSTQA) has biased composition (polar residues). Positions 450 to 461 (STAASSNNNVSN) are enriched in low complexity. Polar residues-rich tracts occupy residues 462–485 (QPDN…PSNP) and 492–503 (DNIQKPSVSTND). An O-linked (Glc...) tyrosine glycan is attached at Tyr598.

It belongs to the glycosyltransferase 8 family. Glycogenin subfamily. It depends on Mn(2+) as a cofactor.

It is found in the cytoplasm. It localises to the vacuole. The enzyme catalyses L-tyrosyl-[glycogenin] + UDP-alpha-D-glucose = alpha-D-glucosyl-L-tyrosyl-[glycogenin] + UDP + H(+). It carries out the reaction [1,4-alpha-D-glucosyl](n)-L-tyrosyl-[glycogenin] + UDP-alpha-D-glucose = [1,4-alpha-D-glucosyl](n+1)-L-tyrosyl-[glycogenin] + UDP + H(+). In terms of biological role, self-glucosylating initiator of glycogen synthesis. It catalyzes the formation of a short alpha (1,4)-glucosyl chain covalently attached via a glucose 1-O-tyrosyl linkage to internal tyrosine residues and these chains act as primers for the elongation reaction catalyzed by glycogen synthase. Capable of transferring glucosyl residues to unbound acceptors such as free oligoglucans or oligoglucan derivatives. In Saccharomyces cerevisiae (strain YJM789) (Baker's yeast), this protein is Glycogenin-1 (GLG1).